The sequence spans 413 residues: Multifunctional CCA protein (413 aa).

Positions 8 and 11 each coordinate ATP. Positions 8 and 11 each coordinate CTP. Mg(2+) is bound by residues E21 and D23. 3 residues coordinate ATP: R91, R137, and R140. CTP-binding residues include R91, R137, and R140. One can recognise an HD domain in the interval 228-329 (TGEHTLLALA…LKLLEGLDLF (102 aa)).

The protein belongs to the tRNA nucleotidyltransferase/poly(A) polymerase family. Bacterial CCA-adding enzyme type 1 subfamily. As to quaternary structure, monomer. Can also form homodimers and oligomers. The cofactor is Mg(2+). Ni(2+) serves as cofactor.

It catalyses the reaction a tRNA precursor + 2 CTP + ATP = a tRNA with a 3' CCA end + 3 diphosphate. The catalysed reaction is a tRNA with a 3' CCA end + 2 CTP + ATP = a tRNA with a 3' CCACCA end + 3 diphosphate. Catalyzes the addition and repair of the essential 3'-terminal CCA sequence in tRNAs without using a nucleic acid template. Adds these three nucleotides in the order of C, C, and A to the tRNA nucleotide-73, using CTP and ATP as substrates and producing inorganic pyrophosphate. tRNA 3'-terminal CCA addition is required both for tRNA processing and repair. Also involved in tRNA surveillance by mediating tandem CCA addition to generate a CCACCA at the 3' terminus of unstable tRNAs. While stable tRNAs receive only 3'-terminal CCA, unstable tRNAs are marked with CCACCA and rapidly degraded. This chain is Multifunctional CCA protein, found in Alkalilimnicola ehrlichii (strain ATCC BAA-1101 / DSM 17681 / MLHE-1).